Consider the following 291-residue polypeptide: Acetyl-coenzyme A carboxylase carboxyl transferase subunit beta (291 aa).

The 263-residue stretch at 29–291 (IMTKCPDCKK…TGGDLEWLEN (263 aa)) folds into the CoA carboxyltransferase N-terminal domain. Cys-33, Cys-36, Cys-52, and Cys-55 together coordinate Zn(2+). A C4-type zinc finger spans residues 33–55 (CPDCKKIMLTKELDKNLRVCMNC).

The protein belongs to the AccD/PCCB family. Acetyl-CoA carboxylase is a heterohexamer composed of biotin carboxyl carrier protein (AccB), biotin carboxylase (AccC) and two subunits each of ACCase subunit alpha (AccA) and ACCase subunit beta (AccD). Zn(2+) serves as cofactor.

It is found in the cytoplasm. The catalysed reaction is N(6)-carboxybiotinyl-L-lysyl-[protein] + acetyl-CoA = N(6)-biotinyl-L-lysyl-[protein] + malonyl-CoA. Its pathway is lipid metabolism; malonyl-CoA biosynthesis; malonyl-CoA from acetyl-CoA: step 1/1. Its function is as follows. Component of the acetyl coenzyme A carboxylase (ACC) complex. Biotin carboxylase (BC) catalyzes the carboxylation of biotin on its carrier protein (BCCP) and then the CO(2) group is transferred by the transcarboxylase to acetyl-CoA to form malonyl-CoA. This chain is Acetyl-coenzyme A carboxylase carboxyl transferase subunit beta, found in Bacillus licheniformis (strain ATCC 14580 / DSM 13 / JCM 2505 / CCUG 7422 / NBRC 12200 / NCIMB 9375 / NCTC 10341 / NRRL NRS-1264 / Gibson 46).